The sequence spans 116 residues: Large ribosomal subunit protein uL18 (116 aa).

The protein belongs to the universal ribosomal protein uL18 family. Part of the 50S ribosomal subunit; part of the 5S rRNA/L5/L18/L25 subcomplex. Contacts the 5S and 23S rRNAs.

This is one of the proteins that bind and probably mediate the attachment of the 5S RNA into the large ribosomal subunit, where it forms part of the central protuberance. The sequence is that of Large ribosomal subunit protein uL18 from Pseudomonas aeruginosa (strain UCBPP-PA14).